Reading from the N-terminus, the 290-residue chain is Ribosomal RNA small subunit methyltransferase A (290 aa).

Residues Asn-27, Leu-29, Gly-54, Glu-75, Asp-100, and Asn-125 each coordinate S-adenosyl-L-methionine.

The protein belongs to the class I-like SAM-binding methyltransferase superfamily. rRNA adenine N(6)-methyltransferase family. RsmA subfamily.

The protein localises to the cytoplasm. It carries out the reaction adenosine(1518)/adenosine(1519) in 16S rRNA + 4 S-adenosyl-L-methionine = N(6)-dimethyladenosine(1518)/N(6)-dimethyladenosine(1519) in 16S rRNA + 4 S-adenosyl-L-homocysteine + 4 H(+). In terms of biological role, specifically dimethylates two adjacent adenosines (A1518 and A1519) in the loop of a conserved hairpin near the 3'-end of 16S rRNA in the 30S particle. May play a critical role in biogenesis of 30S subunits. This is Ribosomal RNA small subunit methyltransferase A from Streptococcus agalactiae serotype V (strain ATCC BAA-611 / 2603 V/R).